The primary structure comprises 460 residues: V-type ATP synthase beta chain (460 aa).

Belongs to the ATPase alpha/beta chains family.

Produces ATP from ADP in the presence of a proton gradient across the membrane. The V-type beta chain is a regulatory subunit. The polypeptide is V-type ATP synthase beta chain (Clostridium perfringens (strain ATCC 13124 / DSM 756 / JCM 1290 / NCIMB 6125 / NCTC 8237 / Type A)).